The following is a 176-amino-acid chain: Cytochrome b (176 aa).

3 helical membrane-spanning segments follow: residues 33–53 (FGSLLGICLTIQILTGLFLAM), 77–98 (WLLRYLHANGASMFFICLYLHV), and 113–133 (WNMGIILLFAVMATAFMGYVL). Heme b contacts are provided by His-83 and His-97.

It belongs to the cytochrome b family. In terms of assembly, the cytochrome bc1 complex contains 11 subunits: 3 respiratory subunits (MT-CYB, CYC1 and UQCRFS1), 2 core proteins (UQCRC1 and UQCRC2) and 6 low-molecular weight proteins (UQCRH/QCR6, UQCRB/QCR7, UQCRQ/QCR8, UQCR10/QCR9, UQCR11/QCR10 and a cleavage product of UQCRFS1). This cytochrome bc1 complex then forms a dimer. Heme b serves as cofactor.

Its subcellular location is the mitochondrion inner membrane. Functionally, component of the ubiquinol-cytochrome c reductase complex (complex III or cytochrome b-c1 complex) that is part of the mitochondrial respiratory chain. The b-c1 complex mediates electron transfer from ubiquinol to cytochrome c. Contributes to the generation of a proton gradient across the mitochondrial membrane that is then used for ATP synthesis. In Tomopeas ravum (Blunt-eared bat), this protein is Cytochrome b (MT-CYB).